The primary structure comprises 229 residues: DNA mismatch repair protein MutH (229 aa).

This sequence belongs to the MutH family.

It is found in the cytoplasm. Sequence-specific endonuclease that cleaves unmethylated GATC sequences. It is involved in DNA mismatch repair. In Escherichia coli O127:H6 (strain E2348/69 / EPEC), this protein is DNA mismatch repair protein MutH.